Here is a 436-residue protein sequence, read N- to C-terminus: Cyclic nucleotide-binding domain-containing protein 1 (436 aa).

Basic and acidic residues predominate over residues 89 to 105 (EQRELNEGKEESQHQQP). Positions 89-108 (EQRELNEGKEESQHQQPDDS) are disordered. 322–436 (YYEEWPTLSI…IIEDKDLFVA (115 aa)) is an a nucleoside 3',5'-cyclic phosphate binding site.

This is Cyclic nucleotide-binding domain-containing protein 1 (CNBD1) from Homo sapiens (Human).